Here is a 383-residue protein sequence, read N- to C-terminus: Probable L-tyrosine/L-aspartate decarboxylase (383 aa).

Residue Lys227 is modified to N6-(pyridoxal phosphate)lysine.

Belongs to the group II decarboxylase family. MfnA subfamily. The cofactor is pyridoxal 5'-phosphate.

The catalysed reaction is L-tyrosine + H(+) = tyramine + CO2. It catalyses the reaction L-aspartate + H(+) = beta-alanine + CO2. Its pathway is cofactor biosynthesis; methanofuran biosynthesis. The protein operates within cofactor biosynthesis; coenzyme A biosynthesis. Its function is as follows. Catalyzes the decarboxylation of L-tyrosine to produce tyramine for methanofuran biosynthesis. Can also catalyze the decarboxylation of L-aspartate to produce beta-alanine for coenzyme A (CoA) biosynthesis. The sequence is that of Probable L-tyrosine/L-aspartate decarboxylase from Methanothrix thermoacetophila (strain DSM 6194 / JCM 14653 / NBRC 101360 / PT) (Methanosaeta thermophila).